Here is a 394-residue protein sequence, read N- to C-terminus: Cobalt-precorrin-5B C(1)-methyltransferase (394 aa).

It belongs to the CbiD family.

The enzyme catalyses Co-precorrin-5B + S-adenosyl-L-methionine = Co-precorrin-6A + S-adenosyl-L-homocysteine. The protein operates within cofactor biosynthesis; adenosylcobalamin biosynthesis; cob(II)yrinate a,c-diamide from sirohydrochlorin (anaerobic route): step 6/10. Catalyzes the methylation of C-1 in cobalt-precorrin-5B to form cobalt-precorrin-6A. In Clostridium beijerinckii (strain ATCC 51743 / NCIMB 8052) (Clostridium acetobutylicum), this protein is Cobalt-precorrin-5B C(1)-methyltransferase.